Here is a 145-residue protein sequence, read N- to C-terminus: Large ribosomal subunit protein bL19 (145 aa).

The protein belongs to the bacterial ribosomal protein bL19 family.

This protein is located at the 30S-50S ribosomal subunit interface and may play a role in the structure and function of the aminoacyl-tRNA binding site. This is Large ribosomal subunit protein bL19 from Brucella abortus (strain S19).